A 351-amino-acid chain; its full sequence is Protein Tex24 (351 aa).

Disordered regions lie at residues 69–101, 117–144, and 275–298; these read PSTA…PSLS, PEDR…AQGK, and EKVK…PKSM. Residues 73-83 show a composition bias toward basic residues; sequence HGKRKPGHLPR. Over residues 275–285 the composition is skewed to basic and acidic residues; it reads EKVKPSSHDMH.

Specific to testis, where it is expressed in spermatogonia.

The protein resides in the nucleus. Its function is as follows. Nuclear factor which might have a role in spermatogenesis. This Mus musculus (Mouse) protein is Protein Tex24.